Reading from the N-terminus, the 956-residue chain is Translation initiation factor IF-2 (956 aa).

3 disordered regions span residues Q53 to I102, G116 to A315, and T334 to E371. A compositionally biased stretch (basic and acidic residues) spans K58–I102. Residues V142–S158 show a composition bias toward polar residues. Residues S166–S186 are compositionally biased toward basic and acidic residues. Over residues T197–T208 the composition is skewed to low complexity. Polar residues predominate over residues Q209–N229. Positions I240–N257 are enriched in low complexity. A compositionally biased stretch (basic residues) spans G343–R352. Basic and acidic residues predominate over residues D353–E371. In terms of domain architecture, tr-type G spans T454–D622. Residues G463–T470 are G1. G463–T470 serves as a coordination point for GTP. Residues G488–H492 are G2. Residues D510–G513 are G3. GTP-binding positions include D510–H514 and N564–D567. Residues N564 to D567 form a G4 region. A G5 region spans residues S600 to K602.

The protein belongs to the TRAFAC class translation factor GTPase superfamily. Classic translation factor GTPase family. IF-2 subfamily.

It is found in the cytoplasm. In terms of biological role, one of the essential components for the initiation of protein synthesis. Protects formylmethionyl-tRNA from spontaneous hydrolysis and promotes its binding to the 30S ribosomal subunits. Also involved in the hydrolysis of GTP during the formation of the 70S ribosomal complex. The polypeptide is Translation initiation factor IF-2 (Flavobacterium johnsoniae (strain ATCC 17061 / DSM 2064 / JCM 8514 / BCRC 14874 / CCUG 350202 / NBRC 14942 / NCIMB 11054 / UW101) (Cytophaga johnsonae)).